Consider the following 583-residue polypeptide: Pentatricopeptide repeat-containing protein At2g33760 (583 aa).

PPR repeat units follow at residues D71–P105, S106–L140, D141–K171, S172–P206, D207–L241, N242–A276, W277–D303, N309–S339, and G345–T379. A type E motif region spans residues L383 to E458. The interval N459–K489 is type E(+) motif. Residues E490–W583 form a type DYW motif region.

Belongs to the PPR family. PCMP-H subfamily.

This chain is Pentatricopeptide repeat-containing protein At2g33760 (PCMP-H6), found in Arabidopsis thaliana (Mouse-ear cress).